A 137-amino-acid chain; its full sequence is Protein cornichon homolog 4 (137 aa).

3 helical membrane-spanning segments follow: residues 8–28, 53–73, and 113–133; these read LISFFFLIALVGIIVYQLVCL, FIVQGVLCVFYLLTGHWFMTL, and LAYIVLNLFLTIFWMIYSALD.

The protein belongs to the cornichon family.

Its subcellular location is the membrane. This chain is Protein cornichon homolog 4, found in Arabidopsis thaliana (Mouse-ear cress).